The primary structure comprises 118 residues: Altered inheritance of mitochondria protein 26, mitochondrial (118 aa).

The next 3 helical transmembrane spans lie at 7 to 27 (EHLLLSQLKGSFFLLLLAYFF), 41 to 61 (LAVTPGAITIAIAIATDSIPA), and 98 to 118 (FLFCLGSARFCISFPCFGLSI).

It localises to the mitochondrion membrane. In terms of biological role, involved in selective mitochondria autophagy (mitophagy). The protein is Altered inheritance of mitochondria protein 26, mitochondrial (AIM26) of Saccharomyces cerevisiae (strain ATCC 204508 / S288c) (Baker's yeast).